The chain runs to 119 residues: EVKLLESGGGLVQPGGSLKLSCAASGFDFSRYWMSWVRQAPGKGLEWIGEINPDSSTINYTPSLKDKFIISRDNAKNTLYLQMSKVRSEDTALYYCARLGYYGYFDVWGAGTTVTVSSE.

The Ig-like domain maps to 1–112 (EVKLLESGGG…GYFDVWGAGT (112 aa)).

In Mus musculus (Mouse), this protein is Ig heavy chain V region T601.